A 290-amino-acid chain; its full sequence is Putative OX-2 membrane glycoprotein homolog (290 aa).

A signal peptide spans 1–17; that stretch reads MSSLMLRLLPLLYIISA. Residues 18-267 are Extracellular-facing; that stretch reads HFVLHPETSP…SDETVFTWTV (250 aa). Residues 23–135 enclose the Ig-like V-type domain; that stretch reads PETSPSLIYE…TFTVDNEKTS (113 aa). C41 and C125 are joined by a disulfide. 4 N-linked (GlcNAc...) asparagine; by host glycosylation sites follow: N71, N104, N194, and N202. The region spanning 146-236 is the Ig-like C2-type domain; it reads PIVVLYFRYL…TNQKASALVT (91 aa). A helical transmembrane segment spans residues 268–288; it reads PLILILISVIVLLISVCIVAF. Residues 289 to 290 lie on the Cytoplasmic side of the membrane; the sequence is KS.

The protein localises to the membrane. The chain is Putative OX-2 membrane glycoprotein homolog (U85) from Homo sapiens (Human).